The primary structure comprises 258 residues: Aspartate/glutamate leucyltransferase (258 aa).

Belongs to the R-transferase family. Bpt subfamily.

Its subcellular location is the cytoplasm. It carries out the reaction N-terminal L-glutamyl-[protein] + L-leucyl-tRNA(Leu) = N-terminal L-leucyl-L-glutamyl-[protein] + tRNA(Leu) + H(+). The catalysed reaction is N-terminal L-aspartyl-[protein] + L-leucyl-tRNA(Leu) = N-terminal L-leucyl-L-aspartyl-[protein] + tRNA(Leu) + H(+). Functions in the N-end rule pathway of protein degradation where it conjugates Leu from its aminoacyl-tRNA to the N-termini of proteins containing an N-terminal aspartate or glutamate. The sequence is that of Aspartate/glutamate leucyltransferase from Bradyrhizobium diazoefficiens (strain JCM 10833 / BCRC 13528 / IAM 13628 / NBRC 14792 / USDA 110).